We begin with the raw amino-acid sequence, 159 residues long: Phosphopantetheine adenylyltransferase (159 aa).

Residue T9 coordinates substrate. ATP contacts are provided by residues 9-10 and H17; that span reads TF. 3 residues coordinate substrate: K41, L73, and R87. ATP is bound by residues 88-90, E98, and 123-129; these read GLR and YSFISST.

This sequence belongs to the bacterial CoaD family. In terms of assembly, homohexamer. Requires Mg(2+) as cofactor.

Its subcellular location is the cytoplasm. It carries out the reaction (R)-4'-phosphopantetheine + ATP + H(+) = 3'-dephospho-CoA + diphosphate. The protein operates within cofactor biosynthesis; coenzyme A biosynthesis; CoA from (R)-pantothenate: step 4/5. Functionally, reversibly transfers an adenylyl group from ATP to 4'-phosphopantetheine, yielding dephospho-CoA (dPCoA) and pyrophosphate. This is Phosphopantetheine adenylyltransferase from Pseudomonas putida (strain GB-1).